The following is a 411-amino-acid chain: Tyrosine--tRNA ligase (411 aa).

The short motif at 50-59 is the 'HIGH' region element; that stretch reads PTRPDLHLGH. The 'KMSKS' region motif lies at 236 to 240; it reads KMSKS. Lys239 is an ATP binding site. The region spanning 345–409 is the S4 RNA-binding domain; the sequence is VSMAKLVVLA…GKDKFARLVL (65 aa).

Belongs to the class-I aminoacyl-tRNA synthetase family. TyrS type 2 subfamily. Homodimer.

It is found in the cytoplasm. It carries out the reaction tRNA(Tyr) + L-tyrosine + ATP = L-tyrosyl-tRNA(Tyr) + AMP + diphosphate + H(+). Functionally, catalyzes the attachment of tyrosine to tRNA(Tyr) in a two-step reaction: tyrosine is first activated by ATP to form Tyr-AMP and then transferred to the acceptor end of tRNA(Tyr). The chain is Tyrosine--tRNA ligase from Deinococcus radiodurans (strain ATCC 13939 / DSM 20539 / JCM 16871 / CCUG 27074 / LMG 4051 / NBRC 15346 / NCIMB 9279 / VKM B-1422 / R1).